The following is a 139-amino-acid chain: Maximins 4/H3 type 4 (139 aa).

The N-terminal stretch at 1–18 is a signal peptide; the sequence is MNFKYIIAVSFLIASAYA. A propeptide spanning residues 19–43 is cleaved from the precursor; sequence RSVQNDEQSLSQRDVLEEESLREIR. Asparagine 70 is modified (asparagine amide). Residues 74 to 118 constitute a propeptide that is removed on maturation; that stretch reads TAEEHEVMKRLEAVMRDLDSLDHPEEASERETRGFNQDEIAKEKR. The residue at position 138 (isoleucine 138) is an Isoleucine amide.

The protein belongs to the bombinin family. Expressed by the skin glands.

Its subcellular location is the secreted. Maximin-4 shows antibacterial activity against both Gram-positive and Gram-negative bacteria. It also shows antimicrobial activity against the fungus C.albicans, but not against A.flavus nor P.uticale. It has little hemolytic activity. It does not possess a significant cytotoxicity against tumor cell lines. It does not possess a significant anti-HIV activity. Functionally, maximin-H3 shows antibacterial activity against both Gram-positive and Gram-negative bacteria. It also shows antimicrobial activity against the fungus C.albicans. Shows strong hemolytic activity. The polypeptide is Maximins 4/H3 type 4 (Bombina maxima (Giant fire-bellied toad)).